A 329-amino-acid chain; its full sequence is Quinone oxidoreductase (329 aa).

Ala2 is modified (N-acetylalanine). Lys23 carries the post-translational modification N6-acetyllysine. Residues Tyr53, 158–161 (SGGV), Gly181, His200, Asn229, 246–249 (VGCR), and 269–271 (VSL) contribute to the NADP(+) site. Lys296 bears the N6-succinyllysine mark.

Belongs to the zinc-containing alcohol dehydrogenase family. Quinone oxidoreductase subfamily. As to quaternary structure, homotetramer.

It localises to the cytoplasm. The catalysed reaction is 2 a quinone + NADPH + H(+) = 2 a 1,4-benzosemiquinone + NADP(+). Does not have alcohol dehydrogenase activity. Binds NADP and acts through a one-electron transfer process. Orthoquinones, such as 1,2-naphthoquinone or 9,10-phenanthrenequinone, are the best substrates (in vitro). May act in the detoxification of xenobiotics. Interacts with (AU)-rich elements (ARE) in the 3'-UTR of target mRNA species and enhances their stability. NADPH binding interferes with mRNA binding. The protein is Quinone oxidoreductase (Cryz) of Rattus norvegicus (Rat).